We begin with the raw amino-acid sequence, 336 residues long: 4-hydroxy-3-methylbut-2-enyl diphosphate reductase (336 aa).

Residue Cys-32 participates in [4Fe-4S] cluster binding. Residues His-61 and His-94 each contribute to the (2E)-4-hydroxy-3-methylbut-2-enyl diphosphate site. Dimethylallyl diphosphate is bound by residues His-61 and His-94. Isopentenyl diphosphate contacts are provided by His-61 and His-94. Residue Cys-116 participates in [4Fe-4S] cluster binding. His-148 contributes to the (2E)-4-hydroxy-3-methylbut-2-enyl diphosphate binding site. His-148 contacts dimethylallyl diphosphate. His-148 is an isopentenyl diphosphate binding site. Glu-150 (proton donor) is an active-site residue. (2E)-4-hydroxy-3-methylbut-2-enyl diphosphate is bound at residue Thr-189. Cys-219 is a binding site for [4Fe-4S] cluster. Residues Ser-247, Ser-248, Asn-249, and Ser-292 each coordinate (2E)-4-hydroxy-3-methylbut-2-enyl diphosphate. The dimethylallyl diphosphate site is built by Ser-247, Ser-248, Asn-249, and Ser-292. Residues Ser-247, Ser-248, Asn-249, and Ser-292 each coordinate isopentenyl diphosphate.

The protein belongs to the IspH family. [4Fe-4S] cluster is required as a cofactor.

It carries out the reaction isopentenyl diphosphate + 2 oxidized [2Fe-2S]-[ferredoxin] + H2O = (2E)-4-hydroxy-3-methylbut-2-enyl diphosphate + 2 reduced [2Fe-2S]-[ferredoxin] + 2 H(+). It catalyses the reaction dimethylallyl diphosphate + 2 oxidized [2Fe-2S]-[ferredoxin] + H2O = (2E)-4-hydroxy-3-methylbut-2-enyl diphosphate + 2 reduced [2Fe-2S]-[ferredoxin] + 2 H(+). The protein operates within isoprenoid biosynthesis; dimethylallyl diphosphate biosynthesis; dimethylallyl diphosphate from (2E)-4-hydroxy-3-methylbutenyl diphosphate: step 1/1. Its pathway is isoprenoid biosynthesis; isopentenyl diphosphate biosynthesis via DXP pathway; isopentenyl diphosphate from 1-deoxy-D-xylulose 5-phosphate: step 6/6. Its function is as follows. Catalyzes the conversion of 1-hydroxy-2-methyl-2-(E)-butenyl 4-diphosphate (HMBPP) into a mixture of isopentenyl diphosphate (IPP) and dimethylallyl diphosphate (DMAPP). Acts in the terminal step of the DOXP/MEP pathway for isoprenoid precursor biosynthesis. The polypeptide is 4-hydroxy-3-methylbut-2-enyl diphosphate reductase (Gluconobacter oxydans (strain 621H) (Gluconobacter suboxydans)).